The primary structure comprises 595 residues: Elongation factor 4 (595 aa).

Positions 2 to 183 (KNIRNFCIIA…AIIERISPPT (182 aa)) constitute a tr-type G domain. Residues 14–19 (DHGKST) and 130–133 (NKID) each bind GTP.

This sequence belongs to the TRAFAC class translation factor GTPase superfamily. Classic translation factor GTPase family. LepA subfamily.

It is found in the cell inner membrane. It carries out the reaction GTP + H2O = GDP + phosphate + H(+). Its function is as follows. Required for accurate and efficient protein synthesis under certain stress conditions. May act as a fidelity factor of the translation reaction, by catalyzing a one-codon backward translocation of tRNAs on improperly translocated ribosomes. Back-translocation proceeds from a post-translocation (POST) complex to a pre-translocation (PRE) complex, thus giving elongation factor G a second chance to translocate the tRNAs correctly. Binds to ribosomes in a GTP-dependent manner. This is Elongation factor 4 from Amoebophilus asiaticus (strain 5a2).